A 390-amino-acid polypeptide reads, in one-letter code: 3-ketoacyl-CoA thiolase (390 aa).

C95 (acyl-thioester intermediate) is an active-site residue. Residues H346 and C376 each act as proton acceptor in the active site.

It belongs to the thiolase-like superfamily. Thiolase family. As to quaternary structure, heterotetramer of two alpha chains (FadB) and two beta chains (FadA).

It is found in the cytoplasm. The catalysed reaction is an acyl-CoA + acetyl-CoA = a 3-oxoacyl-CoA + CoA. It participates in lipid metabolism; fatty acid beta-oxidation. Catalyzes the final step of fatty acid oxidation in which acetyl-CoA is released and the CoA ester of a fatty acid two carbons shorter is formed. This Psychrobacter cryohalolentis (strain ATCC BAA-1226 / DSM 17306 / VKM B-2378 / K5) protein is 3-ketoacyl-CoA thiolase.